The chain runs to 963 residues: Kinesin-1 heavy chain (963 aa).

Position 2 is an N-acetylalanine (alanine 2). The region spanning 8-325 is the Kinesin motor domain; it reads NIKVMCRFRP…LLFGQRAKTI (318 aa). Position 85–92 (85–92) interacts with ATP; the sequence is GQTSSGKT. Lysine 213 participates in a covalent cross-link: Glycyl lysine isopeptide (Lys-Gly) (interchain with G-Cter in SUMO2). A coiled-coil region spans residues 329–914; the sequence is VCVNVELTAE…AVRSKNMARR (586 aa). Positions 908 to 963 are disordered; sequence SKNMARRGHSAQIAKPIRPGQHPAASPTHPSAIRGGGAFVQNSQPVAVRGGGGKQV. Residues 915 to 963 are globular; it reads GHSAQIAKPIRPGQHPAASPTHPSAIRGGGAFVQNSQPVAVRGGGGKQV. Phosphoserine is present on serine 933. At arginine 956 the chain carries Omega-N-methylarginine.

Belongs to the TRAFAC class myosin-kinesin ATPase superfamily. Kinesin family. Kinesin subfamily. As to quaternary structure, oligomer composed of two heavy chains and two light chains. Interacts with GRIP1 and PPP1R42. Interacts with SYBU. Interacts with JAKMIP1. Interacts with PLEKHM2. Interacts with ECPAS. Interacts with ZFYVE27. Found in a complex with OGT, RHOT1, RHOT2 and TRAK1. Interacts with APP (via cytoplasmic domain).

The protein localises to the cytoplasm. It is found in the cytoskeleton. Its subcellular location is the cytolytic granule membrane. It localises to the lysosome membrane. In terms of biological role, microtubule-dependent motor required for normal distribution of mitochondria and lysosomes. Can induce formation of neurite-like membrane protrusions in non-neuronal cells in a ZFYVE27-dependent manner. Regulates centrosome and nuclear positioning during mitotic entry. During the G2 phase of the cell cycle in a BICD2-dependent manner, antagonizes dynein function and drives the separation of nuclei and centrosomes. Required for anterograde axonal transportation of MAPK8IP3/JIP3 which is essential for MAPK8IP3/JIP3 function in axon elongation. Through binding with PLEKHM2 and ARL8B, directs lysosome movement toward microtubule plus ends. Involved in NK cell-mediated cytotoxicity. Drives the polarization of cytolytic granules and microtubule-organizing centers (MTOCs) toward the immune synapse between effector NK lymphocytes and target cells. The protein is Kinesin-1 heavy chain of Homo sapiens (Human).